The following is a 914-amino-acid chain: High affinity cAMP-specific and IBMX-insensitive 3',5'-cyclic phosphodiesterase 8 (914 aa).

Disordered regions lie at residues 1 to 27 (MGCS…PLDA) and 113 to 138 (RRAT…HRKS). Residues 116-129 (TGSTGTSGTSSSGG) are compositionally biased toward low complexity. A PAS domain is found at 312–359 (TQQALYTALHRLKEVVLITDDLLRIQYANRATERLLNMRLDEIISKQL). The 336-residue stretch at 558–893 (TAAIVPAKMK…SQWKKYDEQG (336 aa)) folds into the PDEase domain. The active-site Proton donor is the His640. A divalent metal cation-binding residues include His644, His682, Asp683, and Asp799.

The protein belongs to the cyclic nucleotide phosphodiesterase family. PDE8 subfamily. A divalent metal cation is required as a cofactor. Expressed in Malpighian tubules and head.

The enzyme catalyses 3',5'-cyclic AMP + H2O = AMP + H(+). It functions in the pathway purine metabolism; 3',5'-cyclic AMP degradation; AMP from 3',5'-cyclic AMP: step 1/1. Its function is as follows. Hydrolyzes the second messenger cAMP, which is a key regulator of many important physiological processes. Involved in the positive regulation of MAP kinase signaling and in inhibiting oxidative stress-induced cell death. The protein is High affinity cAMP-specific and IBMX-insensitive 3',5'-cyclic phosphodiesterase 8 of Drosophila melanogaster (Fruit fly).